Consider the following 163-residue polypeptide: Putative 4-hydroxy-4-methyl-2-oxoglutarate aldolase (163 aa).

Substrate contacts are provided by residues 76-79 and arginine 98; that span reads GDMI. A divalent metal cation is bound at residue aspartate 99.

Belongs to the class II aldolase/RraA-like family. Homotrimer. The cofactor is a divalent metal cation.

It carries out the reaction 4-hydroxy-4-methyl-2-oxoglutarate = 2 pyruvate. The enzyme catalyses oxaloacetate + H(+) = pyruvate + CO2. Its function is as follows. Catalyzes the aldol cleavage of 4-hydroxy-4-methyl-2-oxoglutarate (HMG) into 2 molecules of pyruvate. Also contains a secondary oxaloacetate (OAA) decarboxylase activity due to the common pyruvate enolate transition state formed following C-C bond cleavage in the retro-aldol and decarboxylation reactions. This Pseudomonas fluorescens protein is Putative 4-hydroxy-4-methyl-2-oxoglutarate aldolase.